The following is a 389-amino-acid chain: Alcohol dehydrogenase-like 5 (389 aa).

Zn(2+) contacts are provided by cysteine 54, threonine 56, histidine 77, cysteine 107, cysteine 110, cysteine 113, cysteine 121, and cysteine 186. An alcohol-binding residues include threonine 56 and histidine 77. Residue threonine 56 coordinates NAD(+). NAD(+) contacts are provided by residues 211–216, aspartate 235, lysine 240, 305–307, phenylalanine 332, and arginine 382; these read GLGAVG and LGI.

Belongs to the zinc-containing alcohol dehydrogenase family. Class-III subfamily. As to quaternary structure, homodimer. The cofactor is Zn(2+).

Its subcellular location is the cytoplasm. The catalysed reaction is a primary alcohol + NAD(+) = an aldehyde + NADH + H(+). The enzyme catalyses a secondary alcohol + NAD(+) = a ketone + NADH + H(+). This is Alcohol dehydrogenase-like 5 from Arabidopsis thaliana (Mouse-ear cress).